Reading from the N-terminus, the 20-residue chain is Large ribosomal subunit protein uL10 (20 aa).

The protein belongs to the universal ribosomal protein uL10 family. In terms of assembly, part of the ribosomal stalk of the 50S ribosomal subunit. The N-terminus interacts with L11 and the large rRNA to form the base of the stalk. The C-terminus forms an elongated spine to which L12 dimers bind in a sequential fashion forming a multimeric L10(L12)X complex.

Forms part of the ribosomal stalk, playing a central role in the interaction of the ribosome with GTP-bound translation factors. The chain is Large ribosomal subunit protein uL10 (rplJ) from Citrobacter freundii.